Consider the following 1089-residue polypeptide: MPAGSNEPDGVLSYQRPDEEAVVDQGGTSTILNIHYEKEELEGHRTLYVGVRMPLGRQSHRHHRTHGQKHRRRGGRGKGASQGEEGLEALAHDTPSQRVQFILGTEEDEEHVPHELFTELDEICMKEGEDAEWKETARWLKFEEDVEDGGERWSKPYVATLSLHSLFELRSCLINGSVLLDMRASSIEEISDLILDQQELLRDLSDSVRVKVREALLKKHHHQNERRRNNLIPIVRSFAEVGKKQSDPHSMDRDGQTVSPQSATNLEVKNGVNCEHSPVDLSKVDLHFMKKIPTGAEASNVLVGEVDTLDRPIVAFVRLSPAVLLSGLTEVPIPTRFLFILLGPVGKGQQYHEIGRSMATIMTDEIFHDVAYKAKERDDLLAGIDEFLDQVTVLPPGEWDPSIRIEPPKNVPSQEKRKMPGVPNGNVCHIEPEPHGGHSGPELERTGRLFGGLVLDVKRKAPWYWSDYRDALSLQCLASFLFLYCACMSPVITFGGLLGEATEGRISAIESLFGASMTGIAYSLFAGQPLTILGSTGPVLVFEKILFKFCKDYALSYLSLRALIGLWTAFLCIVLVATDASSLVCYITRFTEEAFASLICIIFIYEAIEKLIHLAETYPIHMHSQLDHLSLYYCRCVLPENPNNHTLQYWKDHNILAAEVNWANLTVSECQEMHGEFMGSACGHHGPYTPDVLFWSCILFFATFIVSSTLKTFKTSRYFPTRVRSMVSDFAVFLTIFTMVVLDFLIGVPSPKLQVPNVFKPTRDDRGWFINPIGPNPWWTVIAAIIPALLCTILIFMDQQITAVIINRKEHKLKKGCGYHLDLLMVAVMLGVCSIMGLPWFVAATVLSITHVNSLKLESECSAPGEQPKFLGIREQRVTGLMIFVLMGCSVFMTAVLKFIPMPVLYGVFLYMGVSSLQGIQFFDRLKLFGMPAKHQPDFIYLRHVPLRKVHLFTLVQLTCLVLLWVIKASPAAIVFPMMVLALVFVRKVMDLCFSKRELSWLDDLMPESKKKKLDDAKKKEEEEAEKMLDIGGDKFPLESRKLLSSPGKSSSFRCDPSEINISDEMPKTTVWKALSINSGNTKEKSPFN.

Topologically, residues 1-476 (MPAGSNEPDG…DYRDALSLQC (476 aa)) are extracellular. The tract at residues 55-90 (LGRQSHRHHRTHGQKHRRRGGRGKGASQGEEGLEAL) is disordered. Basic residues predominate over residues 58-76 (QSHRHHRTHGQKHRRRGGR). A helical transmembrane segment spans residues 477–497 (LASFLFLYCACMSPVITFGGL). Residues 498 to 505 (LGEATEGR) lie on the Cytoplasmic side of the membrane. A helical membrane pass occupies residues 506–526 (ISAIESLFGASMTGIAYSLFA). Topologically, residues 527 to 563 (GQPLTILGSTGPVLVFEKILFKFCKDYALSYLSLRAL) are extracellular. A helical transmembrane segment spans residues 564 to 584 (IGLWTAFLCIVLVATDASSLV). Topologically, residues 585-593 (CYITRFTEE) are cytoplasmic. Residues 594 to 614 (AFASLICIIFIYEAIEKLIHL) form a helical membrane-spanning segment. The Extracellular segment spans residues 615–685 (AETYPIHMHS…EFMGSACGHH (71 aa)). Intrachain disulfides connect Cys634–Cys682 and Cys636–Cys670. The N-linked (GlcNAc) asparagine glycan is linked to Asn644. A helical transmembrane segment spans residues 686 to 706 (GPYTPDVLFWSCILFFATFIV). The Cytoplasmic portion of the chain corresponds to 707–729 (SSTLKTFKTSRYFPTRVRSMVSD). A helical transmembrane segment spans residues 730-750 (FAVFLTIFTMVVLDFLIGVPS). Residues 751-776 (PKLQVPNVFKPTRDDRGWFINPIGPN) are Extracellular-facing. Residues 777–797 (PWWTVIAAIIPALLCTILIFM) traverse the membrane as a helical segment. Residues 798–822 (DQQITAVIINRKEHKLKKGCGYHLD) are Cytoplasmic-facing. Residues 823 to 843 (LLMVAVMLGVCSIMGLPWFVA) traverse the membrane as a helical segment. The Extracellular portion of the chain corresponds to 844–879 (ATVLSITHVNSLKLESECSAPGEQPKFLGIREQRVT). The helical transmembrane segment at 880–900 (GLMIFVLMGCSVFMTAVLKFI) threads the bilayer. Over 901 to 902 (PM) the chain is Cytoplasmic. A helical transmembrane segment spans residues 903–923 (PVLYGVFLYMGVSSLQGIQFF). Over 924–960 (DRLKLFGMPAKHQPDFIYLRHVPLRKVHLFTLVQLTC) the chain is Extracellular. The helical transmembrane segment at 961 to 981 (LVLLWVIKASPAAIVFPMMVL) threads the bilayer. At 982-1089 (ALVFVRKVMD…GNTKEKSPFN (108 aa)) the chain is on the cytoplasmic side.

Belongs to the anion exchanger (TC 2.A.31) family. Homodimer. As to expression, expressed in the hippocampal neurons (at protein level). Highly expressed in brain with lower levels in lung, kidney and heart. In the kidney, there is high expression in the inner medulla, localized to the inner medullary collecting duct. In the brain, there seems to be three transcripts each having a different expression pattern. The smaller 3kb transcript has highest expression levels in the thalamus and the largest 9.5kb transcript has highest levels in the substantia nigra. The middle transcript of 4.4kb, which is also the main transcript in kidney, is highly expressed in thalamus. Hence, the highest levels are observed in the thalamus, amygdala and caudate nucleus and very low expression was seen in the corpus callosum.

It is found in the cell membrane. The protein resides in the apical cell membrane. The protein localises to the basolateral cell membrane. Its subcellular location is the cytoplasmic vesicle. It localises to the secretory vesicle. It is found in the synaptic vesicle membrane. The catalysed reaction is 2 hydrogencarbonate(out) + chloride(in) + Na(+)(out) = 2 hydrogencarbonate(in) + chloride(out) + Na(+)(in). Functionally, mediates electroneutral sodium- and carbonate-dependent chloride-HCO3(-) exchange with a Na(+):HCO3(-) stoichiometry of 2:1. Plays a major role in pH regulation in neurons. Mediates sodium reabsorption in the renal cortical collecting ducts. This chain is Electroneutral sodium bicarbonate exchanger 1, found in Mus musculus (Mouse).